We begin with the raw amino-acid sequence, 61 residues long: Insect toxin AaHIT5 (61 aa).

An LCN-type CS-alpha/beta domain is found at 1–61; it reads DGYIKRHDGC…AWKSETNTCD (61 aa). Cystine bridges form between Cys-10–Cys-60, Cys-14–Cys-35, Cys-21–Cys-42, and Cys-25–Cys-44.

In terms of tissue distribution, expressed by the venom gland.

The protein localises to the secreted. In terms of biological role, excitatory insect toxins induce a spastic paralysis. They bind voltage-independently to sodium channels (Nav) and shift the voltage of activation toward more negative potentials thereby affecting sodium channel activation and promoting spontaneous and repetitive firing. This toxin elicits excitatory activity with no flaccid paralysis despite its high degree of sequence similarity with other depressant insect toxins. This toxin is active only on insects. This Androctonus australis (Sahara scorpion) protein is Insect toxin AaHIT5.